An 896-amino-acid chain; its full sequence is Translation initiation factor IF-2 (896 aa).

Residues 32-306 (LAQAGSSDTK…HKTKKQSEEH (275 aa)) form a disordered region. Composition is skewed to polar residues over residues 35-48 (AGSS…VSKA) and 114-126 (ADST…SSQE). Residues 156–170 (ARNEETPIIRTRTEP) show a composition bias toward basic and acidic residues. Residues 213-237 (QQTRPSVETASTKQQQPSGTNTRPA) are compositionally biased toward polar residues. Positions 256 to 280 (RGPDRDRTKRSDENVKAFTGRDRYG) are enriched in basic and acidic residues. One can recognise a tr-type G domain in the interval 401–570 (IRSPIVAFMG…ALQAEVLELK (170 aa)). The segment at 410-417 (GHVDHGKT) is G1. 410 to 417 (GHVDHGKT) is a GTP binding site. A G2 region spans residues 435 to 439 (AITQH). The interval 456–459 (DTPG) is G3. GTP-binding positions include 456-460 (DTPGH) and 510-513 (NKCD). Residues 510–513 (NKCD) form a G4 region. The G5 stretch occupies residues 546–548 (SAK).

The protein belongs to the TRAFAC class translation factor GTPase superfamily. Classic translation factor GTPase family. IF-2 subfamily.

It is found in the cytoplasm. Its function is as follows. One of the essential components for the initiation of protein synthesis. Protects formylmethionyl-tRNA from spontaneous hydrolysis and promotes its binding to the 30S ribosomal subunits. Also involved in the hydrolysis of GTP during the formation of the 70S ribosomal complex. The protein is Translation initiation factor IF-2 (infB) of Chlamydia muridarum (strain MoPn / Nigg).